A 264-amino-acid polypeptide reads, in one-letter code: uncharacterized protein (264 aa).

The N-terminal stretch at 1 to 22 (MIHSKKLTLGICLVLLIILIGG) is a signal peptide. A lipid anchor (N-palmitoyl cysteine) is attached at Cys23. The S-diacylglycerol cysteine moiety is linked to residue Cys23.

Belongs to the staphylococcal tandem lipoprotein family.

The protein localises to the cell membrane. This is an uncharacterized protein from Staphylococcus aureus (strain N315).